A 157-amino-acid polypeptide reads, in one-letter code: uncharacterized protein (157 aa).

Residue Lys-115 forms an Isoglutamyl lysine isopeptide (Lys-Gln) (interchain with Q-Cter in protein Pup) linkage.

This is an uncharacterized protein from Mycolicibacterium smegmatis (strain ATCC 700084 / mc(2)155) (Mycobacterium smegmatis).